A 278-amino-acid polypeptide reads, in one-letter code: Formamidopyrimidine-DNA glycosylase (278 aa).

Proline 2 serves as the catalytic Schiff-base intermediate with DNA. The active-site Proton donor is the glutamate 3. The active-site Proton donor; for beta-elimination activity is lysine 60. DNA is bound by residues histidine 95 and arginine 114. The segment at 244–278 (WVYRRGGEPCRRCGTIIRRDKLSGRSTHWCPTCQG) adopts an FPG-type zinc-finger fold. The active-site Proton donor; for delta-elimination activity is the arginine 268.

Belongs to the FPG family. Monomer. Zn(2+) serves as cofactor.

It carries out the reaction Hydrolysis of DNA containing ring-opened 7-methylguanine residues, releasing 2,6-diamino-4-hydroxy-5-(N-methyl)formamidopyrimidine.. It catalyses the reaction 2'-deoxyribonucleotide-(2'-deoxyribose 5'-phosphate)-2'-deoxyribonucleotide-DNA = a 3'-end 2'-deoxyribonucleotide-(2,3-dehydro-2,3-deoxyribose 5'-phosphate)-DNA + a 5'-end 5'-phospho-2'-deoxyribonucleoside-DNA + H(+). Involved in base excision repair of DNA damaged by oxidation or by mutagenic agents. Acts as a DNA glycosylase that recognizes and removes damaged bases. Has a preference for oxidized purines, such as 7,8-dihydro-8-oxoguanine (8-oxoG). Has AP (apurinic/apyrimidinic) lyase activity and introduces nicks in the DNA strand. Cleaves the DNA backbone by beta-delta elimination to generate a single-strand break at the site of the removed base with both 3'- and 5'-phosphates. In Parasynechococcus marenigrum (strain WH8102), this protein is Formamidopyrimidine-DNA glycosylase.